The following is a 212-amino-acid chain: Pyridoxine/pyridoxamine 5'-phosphate oxidase (212 aa).

FMN-binding positions include 59–64 (RMVLMK), 74–75 (YS), Lys-81, and Gln-103. A substrate-binding site is contributed by Lys-64. Residues Tyr-121 and Arg-125 each contribute to the substrate site. Residues 138-139 (QS) and Trp-183 contribute to the FMN site. 189–191 (RLH) contacts substrate. Arg-193 is a binding site for FMN.

It belongs to the pyridoxamine 5'-phosphate oxidase family. Homodimer. FMN serves as cofactor.

It carries out the reaction pyridoxamine 5'-phosphate + O2 + H2O = pyridoxal 5'-phosphate + H2O2 + NH4(+). It catalyses the reaction pyridoxine 5'-phosphate + O2 = pyridoxal 5'-phosphate + H2O2. It functions in the pathway cofactor metabolism; pyridoxal 5'-phosphate salvage; pyridoxal 5'-phosphate from pyridoxamine 5'-phosphate: step 1/1. Its pathway is cofactor metabolism; pyridoxal 5'-phosphate salvage; pyridoxal 5'-phosphate from pyridoxine 5'-phosphate: step 1/1. Its function is as follows. Catalyzes the oxidation of either pyridoxine 5'-phosphate (PNP) or pyridoxamine 5'-phosphate (PMP) into pyridoxal 5'-phosphate (PLP). This is Pyridoxine/pyridoxamine 5'-phosphate oxidase from Rhodopseudomonas palustris (strain HaA2).